Reading from the N-terminus, the 178-residue chain is Translation initiation factor IF-3 (178 aa).

Belongs to the IF-3 family. In terms of assembly, monomer.

The protein resides in the cytoplasm. Its function is as follows. IF-3 binds to the 30S ribosomal subunit and shifts the equilibrium between 70S ribosomes and their 50S and 30S subunits in favor of the free subunits, thus enhancing the availability of 30S subunits on which protein synthesis initiation begins. In Legionella pneumophila (strain Paris), this protein is Translation initiation factor IF-3.